We begin with the raw amino-acid sequence, 504 residues long: Kinesin light chain 3 (504 aa).

Residues 90 to 150 (ALSAHVGALE…EEEKRHLEFL (61 aa)) are a coiled coil. A disordered region spans residues 153-197 (LRQYDPPAESQQSESPPRRDSLASLFPSEEEERKGPEAAGAAAAQ). Over residues 158–167 (PPAESQQSES) the composition is skewed to low complexity. The residue at position 173 (Ser-173) is a Phosphoserine. TPR repeat units follow at residues 207–240 (LRTL…LERS), 249–282 (ATML…REQT), 291–324 (AATL…REKV), 333–366 (AKQL…YEAL), and 375–408 (AKTK…EDLP). The tract at residues 411–438 (LGAPNTGTAGDAEQALRRSSSLSKIRES) is disordered. Ser-466 bears the Phosphoserine mark. Positions 472 to 504 (VDAPRAPGTQFPSWHLDKAPRTLSASTQDLSPH) are disordered. Polar residues predominate over residues 494-504 (LSASTQDLSPH). Thr-498 is modified (phosphothreonine). A Phosphoserine modification is found at Ser-502.

This sequence belongs to the kinesin light chain family. As to quaternary structure, oligomer composed of two heavy chains and two light chains. Associates with microtubulin in an ATP-dependent manner. Interacts with KIF5C. Interacts with ODF1. Interacts with LRGUK. Interacts with VDAC2.

It is found in the cytoplasm. Its subcellular location is the cytoskeleton. The protein localises to the mitochondrion. Kinesin is a microtubule-associated force-producing protein that may play a role in organelle transport. Plays a role during spermiogenesis in the development of the sperm tail midpiece and in the normal function of spermatozoa. May play a role in the formation of the mitochondrial sheath formation in the developing spermatid midpiece. This Homo sapiens (Human) protein is Kinesin light chain 3 (KLC3).